The sequence spans 249 residues: Probable transcriptional regulatory protein Strop_1792 (249 aa).

The protein belongs to the TACO1 family.

The protein localises to the cytoplasm. This chain is Probable transcriptional regulatory protein Strop_1792, found in Salinispora tropica (strain ATCC BAA-916 / DSM 44818 / JCM 13857 / NBRC 105044 / CNB-440).